Here is a 457-residue protein sequence, read N- to C-terminus: Cysteine desulfurase (457 aa).

Pyridoxal 5'-phosphate-binding residues include A127, T128, Q235, S255, and H257. At K258 the chain carries N6-(pyridoxal phosphate)lysine. Residue T295 participates in pyridoxal 5'-phosphate binding. C381 acts as the Cysteine persulfide intermediate in catalysis. C381 contacts [2Fe-2S] cluster. C381 contributes to the Zn(2+) binding site. Cysteine persulfide is present on C381.

Belongs to the class-V pyridoxal-phosphate-dependent aminotransferase family. NifS/IscS subfamily. In terms of assembly, homodimer. Component of the mitochondrial core iron-sulfur cluster (ISC) complex composed of NFS1, LYRM4, NDUFAB1, ISCU, FXN, and FDX2; this complex is a heterohexamer containing two copies of each monomer. Component of cyteine desulfurase complex composed of NFS1, LYRM4 and NDUFAB1; this complex contributes to the activation of cysteine desulfurase activity and NFS1 stabilization. Interacts (homodimer form) with ISCU (D-state); each monomer interacts with the C-terminal regions of each NFS1 monomer. Interacts with HSPA9. Interacts (via homodimer form) with FDX2. Interacts (via homodimer form) with FXN. Interacts with LYRM4. Component of a complex composed of FXN, NFS1, LYRM4 and ISCU. Monomer. Homodimer. Oligomer. Interacts with ISCU. Component of the cysteine desulfurase complex composed of NFS1 and LYRM4; this complex contributes to the activation of cysteine desulfurase activity. Interacts with MOCS3. Pyridoxal 5'-phosphate is required as a cofactor. Post-translationally, N-gluconoylated. In terms of processing, cysteine persulfide intermediate is reduced by thiol-containing molecules like glutathione and L-cysteine. Persulfide reduction is a rate-limiting step of cysteine desulfurase catalytic cycle. In terms of tissue distribution, predominantly expressed in heart and skeletal muscle. Also found in brain, liver and pancreas.

The protein resides in the mitochondrion. It is found in the cytoplasm. It localises to the nucleus. Its subcellular location is the cytoskeleton. The protein localises to the microtubule organizing center. The protein resides in the centrosome. It catalyses the reaction (sulfur carrier)-H + L-cysteine = (sulfur carrier)-SH + L-alanine. The catalysed reaction is L-cysteinyl-[cysteine desulfurase] + L-cysteine = S-sulfanyl-L-cysteinyl-[cysteine desulfurase] + L-alanine. Active only in complex with LYRM4. Functionally, cysteine desulfurase, of the core iron-sulfur cluster (ISC) assembly complex, that catalyzes the desulfuration of L-cysteine to L-alanine, as component of the cysteine desulfurase complex, leading to the formation of a cysteine persulfide intermediate at the active site cysteine residue and participates in the [2Fe-2S] clusters assembly on the scaffolding protein ISCU. The persulfide is then transferred on the flexible Cys loop from the catalytic site of NFS1 to the surface of NFS1. After the NFS1-linked persulfide sulfur is transferred to one of the conserved Cys residues of the scaffold, a reaction assisted by FXN. The core iron-sulfur cluster (ISC) assembly complex is involved in the de novo synthesis of a [2Fe-2S] cluster, the first step of the mitochondrial iron-sulfur protein biogenesis. This process is initiated by the cysteine desulfurase complex (NFS1:LYRM4:NDUFAB1) that produces persulfide which is delivered on the scaffold protein ISCU in a FXN-dependent manner. Then this complex is stabilized by FDX2 which provides reducing equivalents to accomplish the [2Fe-2S] cluster assembly. Finally, the [2Fe-2S] cluster is transferred from ISCU to chaperone proteins, including HSCB, HSPA9 and GLRX5. May catalyze the desulfuration of L-cysteine to L-alanine as component of the cysteine desulfurase complex (NFS1:LYRM4), leading to the formation of a cysteine persulfide intermediate. Acts as a sulfur donor for MOCS3 by transferring the sulfur of the cysteine persulfide intermediate on MOCS3. This chain is Cysteine desulfurase, found in Homo sapiens (Human).